The primary structure comprises 63 residues: Sec-independent protein translocase protein TatA (63 aa).

A helical transmembrane segment spans residues 1 to 21 (MGGLSVGSVVLIALVALLIFG).

The protein belongs to the TatA/E family. In terms of assembly, forms a complex with TatC.

The protein localises to the cell membrane. In terms of biological role, part of the twin-arginine translocation (Tat) system that transports large folded proteins containing a characteristic twin-arginine motif in their signal peptide across membranes. TatA could form the protein-conducting channel of the Tat system. The sequence is that of Sec-independent protein translocase protein TatA from Shouchella clausii (strain KSM-K16) (Alkalihalobacillus clausii).